We begin with the raw amino-acid sequence, 120 residues long: Large ribosomal subunit protein uL22 (120 aa).

This sequence belongs to the universal ribosomal protein uL22 family. Part of the 50S ribosomal subunit.

Functionally, this protein binds specifically to 23S rRNA; its binding is stimulated by other ribosomal proteins, e.g. L4, L17, and L20. It is important during the early stages of 50S assembly. It makes multiple contacts with different domains of the 23S rRNA in the assembled 50S subunit and ribosome. The globular domain of the protein is located near the polypeptide exit tunnel on the outside of the subunit, while an extended beta-hairpin is found that lines the wall of the exit tunnel in the center of the 70S ribosome. This Corynebacterium kroppenstedtii (strain DSM 44385 / JCM 11950 / CIP 105744 / CCUG 35717) protein is Large ribosomal subunit protein uL22.